Reading from the N-terminus, the 445-residue chain is rRNA methyltransferase 3B, mitochondrial (445 aa).

The N-terminal 37 residues, 1–37, are a transit peptide targeting the mitochondrion; it reads MATRIASMRFRCALFQSALTLGRNEVNIKRYVRRRRA. Disordered regions lie at residues 52–90 and 311–334; these read EGVI…SQPV and HSTT…SDYG. 3 stretches are compositionally biased toward polar residues: residues 54–70, 78–90, and 311–324; these read VISQ…NDIT, IENP…SQPV, and HSTT…NTTP. Positions 387, 411, and 420 each coordinate S-adenosyl-L-methionine.

The protein belongs to the class IV-like SAM-binding methyltransferase superfamily. RNA methyltransferase TrmH family.

The protein localises to the mitochondrion. The catalysed reaction is a uridine in rRNA + S-adenosyl-L-methionine = a 2'-O-methyluridine in rRNA + S-adenosyl-L-homocysteine + H(+). Functionally, S-adenosyl-L-methionine-dependent 2'-O-ribose methyltransferase that catalyzes the formation of 2'-O-methylguanosine at position 1485 (Gm1485) in the mitochondrial large subunit ribosomal RNA (mtLSU rRNA), a conserved modification in the peptidyl transferase domain of the mtLSU rRNA. Also required for formation of 2'-O-methyluridine at position 1484 (Um1484) mediated by MRM2. This chain is rRNA methyltransferase 3B, mitochondrial, found in Danio rerio (Zebrafish).